Consider the following 650-residue polypeptide: Probable LIM domain-containing serine/threonine-protein kinase DDB_G0287001 (650 aa).

2 consecutive LIM zinc-binding domains span residues 4–63 (NNCG…KLNA) and 64–122 (RKCF…PSDK). Disordered stretches follow at residues 118 to 138 (KPSD…LPGK), 171 to 197 (LSSS…SSFM), and 293 to 320 (LLNS…NLNT). Positions 173-188 (SSGGSGNSISGSGGTN) are enriched in gly residues. The 258-residue stretch at 386-643 (VAFGDVIASG…DTLKKISESL (258 aa)) folds into the Protein kinase domain. ATP-binding positions include 392-400 (IASGASGKV) and Lys413. Asp509 acts as the Proton acceptor in catalysis.

This sequence belongs to the protein kinase superfamily. TKL Ser/Thr protein kinase family.

It catalyses the reaction L-seryl-[protein] + ATP = O-phospho-L-seryl-[protein] + ADP + H(+). The catalysed reaction is L-threonyl-[protein] + ATP = O-phospho-L-threonyl-[protein] + ADP + H(+). The protein is Probable LIM domain-containing serine/threonine-protein kinase DDB_G0287001 of Dictyostelium discoideum (Social amoeba).